The following is a 386-amino-acid chain: Ribosomal RNA small subunit methyltransferase H (386 aa).

S-adenosyl-L-methionine-binding positions include glycine 97 to histidine 99, aspartate 116, tyrosine 143, aspartate 167, and glutamine 174.

The protein belongs to the methyltransferase superfamily. RsmH family.

Its subcellular location is the cytoplasm. It catalyses the reaction cytidine(1402) in 16S rRNA + S-adenosyl-L-methionine = N(4)-methylcytidine(1402) in 16S rRNA + S-adenosyl-L-homocysteine + H(+). Functionally, specifically methylates the N4 position of cytidine in position 1402 (C1402) of 16S rRNA. This chain is Ribosomal RNA small subunit methyltransferase H, found in Mycolicibacterium paratuberculosis (strain ATCC BAA-968 / K-10) (Mycobacterium paratuberculosis).